Reading from the N-terminus, the 557-residue chain is Urocanate hydratase (557 aa).

Residues 53–54, Q131, 177–179, E197, 243–244, 264–268, 274–275, and Y323 each bind NAD(+); these read GG, GMG, NA, QTSAH, and YL. The active site involves C411. G493 provides a ligand contact to NAD(+).

It belongs to the urocanase family. NAD(+) serves as cofactor.

It is found in the cytoplasm. The enzyme catalyses 4-imidazolone-5-propanoate = trans-urocanate + H2O. It functions in the pathway amino-acid degradation; L-histidine degradation into L-glutamate; N-formimidoyl-L-glutamate from L-histidine: step 2/3. In terms of biological role, catalyzes the conversion of urocanate to 4-imidazolone-5-propionate. In Mesorhizobium japonicum (strain LMG 29417 / CECT 9101 / MAFF 303099) (Mesorhizobium loti (strain MAFF 303099)), this protein is Urocanate hydratase.